The sequence spans 507 residues: ATP synthase subunit alpha, chloroplastic (507 aa).

Residue 170–177 coordinates ATP; sequence GDRQTGKT.

Belongs to the ATPase alpha/beta chains family. In terms of assembly, F-type ATPases have 2 components, CF(1) - the catalytic core - and CF(0) - the membrane proton channel. CF(1) has five subunits: alpha(3), beta(3), gamma(1), delta(1), epsilon(1). CF(0) has four main subunits: a, b, b' and c.

The protein localises to the plastid. It is found in the chloroplast thylakoid membrane. It carries out the reaction ATP + H2O + 4 H(+)(in) = ADP + phosphate + 5 H(+)(out). In terms of biological role, produces ATP from ADP in the presence of a proton gradient across the membrane. The alpha chain is a regulatory subunit. The polypeptide is ATP synthase subunit alpha, chloroplastic (Nandina domestica (Heavenly bamboo)).